The following is a 370-amino-acid chain: Cytochrome b (370 aa).

4 consecutive transmembrane segments (helical) span residues 25-45 (FGSM…FLAI), 69-90 (WIMQ…YIHI), 105-125 (WLSG…GYVL), and 170-190 (FFAL…IHII). Heme b contacts are provided by H75 and H89. Heme b-binding residues include H174 and H188. H193 lines the a ubiquinone pocket. 4 helical membrane passes run 218-238 (YKDM…MSFT), 280-300 (LGGT…PFTH), 312-332 (LTQI…WTAT), and 339-358 (FISI…IINP).

This sequence belongs to the cytochrome b family. The cytochrome bc1 complex contains 3 respiratory subunits (MT-CYB, CYC1 and UQCRFS1), 2 core proteins (UQCRC1 and UQCRC2) and probably 6 low-molecular weight proteins. Heme b is required as a cofactor.

The protein resides in the mitochondrion inner membrane. Component of the ubiquinol-cytochrome c reductase complex (complex III or cytochrome b-c1 complex) that is part of the mitochondrial respiratory chain. The b-c1 complex mediates electron transfer from ubiquinol to cytochrome c. Contributes to the generation of a proton gradient across the mitochondrial membrane that is then used for ATP synthesis. This Bungarus fasciatus (Banded krait) protein is Cytochrome b (MT-CYB).